We begin with the raw amino-acid sequence, 216 residues long: Peptide methionine sulfoxide reductase MsrA (216 aa).

Cys54 is a catalytic residue.

This sequence belongs to the MsrA Met sulfoxide reductase family.

The enzyme catalyses L-methionyl-[protein] + [thioredoxin]-disulfide + H2O = L-methionyl-(S)-S-oxide-[protein] + [thioredoxin]-dithiol. The catalysed reaction is [thioredoxin]-disulfide + L-methionine + H2O = L-methionine (S)-S-oxide + [thioredoxin]-dithiol. Functionally, has an important function as a repair enzyme for proteins that have been inactivated by oxidation. Catalyzes the reversible oxidation-reduction of methionine sulfoxide in proteins to methionine. This Xanthomonas euvesicatoria pv. vesicatoria (strain 85-10) (Xanthomonas campestris pv. vesicatoria) protein is Peptide methionine sulfoxide reductase MsrA.